Here is a 2919-residue protein sequence, read N- to C-terminus: Cadherin EGF LAG seven-pass G-type receptor 2 (2919 aa).

The N-terminal stretch at 1-31 (MRSRAASAPLPTPLLPLLLLLLLLPPSPLLG) is a signal peptide. The Extracellular segment spans residues 32–2380 (DQVGPCRSLG…GEILPLKTLT (2349 aa)). The disordered stretch occupies residues 156-194 (LRAGEGSPEESLGGRRKRNVNTAPQFQPPSYQATVPENQ). Positions 175–194 (VNTAPQFQPPSYQATVPENQ) are enriched in polar residues. Cadherin domains follow at residues 182–289 (QPPS…DPVF), 290–399 (EQQE…APQF), 400–505 (SEKR…APIF), 506–610 (VSTP…NPTF), 611–712 (TQPE…RPVF), 713–815 (QSSH…APQF), 816–921 (LRDS…PPVF), 922–1023 (EQDE…PPVL), and 1028–1146 (ILFN…SPLL). 3 N-linked (GlcNAc...) asparagine glycosylation sites follow: Asn-486, Asn-557, and Asn-701. N-linked (GlcNAc...) asparagine glycans are attached at residues Asn-1036, Asn-1076, Asn-1182, and Asn-1212. In terms of domain architecture, EGF-like 1; atypical spans 1228–1286 (DDNICLREPCENYMRCVSVLRFDSSAPFIASSSVLFRPIHPVGGLRCRCPPGFTGDYCE). The EGF-like 2; calcium-binding domain occupies 1288-1318 (EVDLCYSRPCGPHGRCRSREGGYTCLCLDGY). Cystine bridges form between Cys-1292/Cys-1303, Cys-1297/Cys-1312, Cys-1314/Cys-1323, Cys-1332/Cys-1343, Cys-1337/Cys-1353, and Cys-1355/Cys-1365. The 39-residue stretch at 1328 to 1366 (HSGRCTPGVCKNGGTCVNLLVGGFKCDCPSGDFEKPFCQ) folds into the EGF-like 3; calcium-binding domain. In terms of domain architecture, Laminin G-like 1 spans 1367–1571 (VTTRSFPARS…IANNGTVPGC (205 aa)). N-linked (GlcNAc...) asparagine glycans are attached at residues Asn-1501 and Asn-1565. Cystine bridges form between Cys-1545-Cys-1571, Cys-1578-Cys-1589, Cys-1583-Cys-1598, and Cys-1600-Cys-1609. Positions 1574 to 1610 (KKIVCDSSICHNGGTCVNQWNAFSCECPLGFGGKSCA) constitute an EGF-like 4; calcium-binding domain. A (3R)-3-hydroxyasparagine modification is found at Asn-1591. In terms of domain architecture, Laminin G-like 2 spans 1614 to 1791 (ANPQRFLGSS…GESINVEPGC (178 aa)). N-linked (GlcNAc...) asparagine glycosylation occurs at Asn-1741. Residues 1787–1829 (VEPGCSWPDPCDSNPCPTNSYCSNDWDSYSCSCVLGYYGDNCT) enclose the EGF-like 5; calcium-binding domain. Intrachain disulfides connect Cys-1791–Cys-1802, Cys-1797–Cys-1817, Cys-1819–Cys-1828, Cys-1832–Cys-1843, Cys-1837–Cys-1855, Cys-1857–Cys-1866, Cys-1887–Cys-1899, Cys-1889–Cys-1906, Cys-1908–Cys-1921, Cys-1924–Cys-1936, Cys-1926–Cys-1943, Cys-1945–Cys-1954, and Cys-1957–Cys-1969. N-linked (GlcNAc...) asparagine glycosylation occurs at Asn-1827. Positions 1830–1867 (NVCDLNPCEHQSVCTRKPNTPHGYICECLPNYLGPYCE) constitute an EGF-like 6; calcium-binding domain. An EGF-like 7; calcium-binding domain is found at 1883-1922 (TCGPCNCDVSKGFDPDCNKTSGECHCKENHYRPPGSPTCL). Asn-1900 carries an N-linked (GlcNAc...) asparagine glycan. A Laminin EGF-like domain is found at 1924–1971 (CDCYPTGSLSRVCDPEDGQCPCKPGVIGRQCDRCDNPFAEVTTNGCEV). N-linked (GlcNAc...) asparagine glycosylation is found at Asn-2024, Asn-2043, and Asn-2061. The GAIN-B domain occupies 2199-2369 (ETTVILPESV…AVLMDMSRRE (171 aa)). The tract at residues 2216–2241 (VRSAGPGEAQETEELARRQRRHPELS) is disordered. Intrachain disulfides connect Cys-2319-Cys-2351 and Cys-2339-Cys-2353. Positions 2319–2369 (CVFWNHSILVSGTGGWSARGCEVVFRNESHVSCQCNHMTSFAVLMDMSRRE) are GPS. Asn-2323 and Asn-2345 each carry an N-linked (GlcNAc...) asparagine glycan. Residues 2381–2401 (YVALGVTLAALMLTFLFLTLL) form a helical membrane-spanning segment. At 2402–2413 (RALRSNQHGIRR) the chain is on the cytoplasmic side. Residues 2414–2433 (NLTAALGLAQLVFLLGINQA) traverse the membrane as a helical segment. Residues 2434-2438 (DLPFA) lie on the Extracellular side of the membrane. Residues 2439-2459 (CTVIAILLHFLYLCTFSWALL) traverse the membrane as a helical segment. The Cytoplasmic segment spans residues 2460-2480 (EALHLYRALTEVRDVNASPMR). A helical transmembrane segment spans residues 2481–2501 (FYYMLGWGVPAFITGLAVGLD). Residues 2502–2518 (PEGYGNPDFCWLSVYDT) are Extracellular-facing. Residues 2519-2539 (LIWSFAGPVAFAVSMSVFLYI) form a helical membrane-spanning segment. Topologically, residues 2540–2563 (LSARASCAAQRQGFEKKGPVSGLR) are cytoplasmic. The chain crosses the membrane as a helical span at residues 2564–2584 (SSFTVLLLLSATWLLALLSVN). Residues 2585-2591 (SDTLLFH) are Extracellular-facing. Residues 2592 to 2612 (YLFAACNCVQGPFIFLSYVVL) traverse the membrane as a helical segment. Over 2613–2919 (SKEVRKALKF…SEFLFFNFLH (307 aa)) the chain is Cytoplasmic. The tract at residues 2690–2884 (LNPGQVPPGL…PPRPPPRQSL (195 aa)) is disordered. Over residues 2718-2730 (TDSDSDLSLEDDQ) the composition is skewed to acidic residues. Positions 2791–2800 (GTTTKENSGS) are enriched in polar residues. The span at 2803–2815 (LEERPRENGDALT) shows a compositional bias: basic and acidic residues. The segment covering 2857 to 2868 (GTGSSRGSSISE) has biased composition (low complexity).

It belongs to the G-protein coupled receptor 2 family. LN-TM7 subfamily. In terms of assembly, heterodimer of 2 chains generated by proteolytic processing; the large extracellular N-terminal fragment and the membrane-bound C-terminal fragment predominantly remain associated and non-covalently linked. Post-translationally, the iron and 2-oxoglutarate dependent 3-hydroxylation of aspartate and asparagine is (R) stereospecific within EGF domains. In terms of processing, autoproteolytically processed at the GPS region of the GAIN-B domain; this cleavage modulates receptor activity. Expressed in the CNS and in the eye.

Its subcellular location is the cell membrane. In terms of biological role, receptor that may have an important role in cell/cell signaling during nervous system formation. The protein is Cadherin EGF LAG seven-pass G-type receptor 2 of Mus musculus (Mouse).